A 329-amino-acid chain; its full sequence is 4-hydroxythreonine-4-phosphate dehydrogenase (329 aa).

Residues His136 and Thr137 each coordinate substrate. A divalent metal cation is bound by residues His166, His211, and His266. Residues Lys274, Asn283, and Arg292 each coordinate substrate.

It belongs to the PdxA family. In terms of assembly, homodimer. Zn(2+) serves as cofactor. The cofactor is Mg(2+). It depends on Co(2+) as a cofactor.

It is found in the cytoplasm. The catalysed reaction is 4-(phosphooxy)-L-threonine + NAD(+) = 3-amino-2-oxopropyl phosphate + CO2 + NADH. It functions in the pathway cofactor biosynthesis; pyridoxine 5'-phosphate biosynthesis; pyridoxine 5'-phosphate from D-erythrose 4-phosphate: step 4/5. In terms of biological role, catalyzes the NAD(P)-dependent oxidation of 4-(phosphooxy)-L-threonine (HTP) into 2-amino-3-oxo-4-(phosphooxy)butyric acid which spontaneously decarboxylates to form 3-amino-2-oxopropyl phosphate (AHAP). The chain is 4-hydroxythreonine-4-phosphate dehydrogenase from Escherichia coli O139:H28 (strain E24377A / ETEC).